The following is a 569-amino-acid chain: Urease subunit alpha (569 aa).

In terms of domain architecture, Urease spans 131 to 569; the sequence is GSIDTHIHFI…VPMAQKYFLL (439 aa). 3 residues coordinate Ni(2+): His136, His138, and Lys219. An N6-carboxylysine modification is found at Lys219. His221 is a binding site for substrate. The Ni(2+) site is built by His248 and His274. Catalysis depends on His322, which acts as the Proton donor. Asp362 is a binding site for Ni(2+).

Belongs to the metallo-dependent hydrolases superfamily. Urease alpha subunit family. In terms of assembly, heterotrimer of UreA (gamma), UreB (beta) and UreC (alpha) subunits. Two heterotrimers associate to form the active enzyme. In most bacteria it is thought that three heterotrimers form the active enzyme. Ni cation is required as a cofactor. Post-translationally, carboxylation allows a single lysine to coordinate two nickel ions.

It is found in the cytoplasm. The catalysed reaction is urea + 2 H2O + H(+) = hydrogencarbonate + 2 NH4(+). Its pathway is nitrogen metabolism; urea degradation; CO(2) and NH(3) from urea (urease route): step 1/1. Inhibited by HgCl2 and acetohydroxyamic acid slightly by EDTA, but not by boric acid or L-methionine-DL-sulfoximine. In Prochlorococcus marinus subsp. pastoris (strain PCC 9511), this protein is Urease subunit alpha.